A 199-amino-acid polypeptide reads, in one-letter code: ATP synthase subunit a (199 aa).

The next 6 membrane-spanning stretches (helical) occupy residues 2-22, 25-45, 53-73, 80-100, 143-163, and 164-184; these read TNVY…LFYF, SMLG…FSYT, VISV…YFMY, MIEF…LTFI, VNVL…ELYL, and GIFY…VFFI.

The protein belongs to the ATPase A chain family. As to quaternary structure, F-type ATPases have 2 components, CF(1) - the catalytic core - and CF(0) - the membrane proton channel. CF(1) has five subunits: alpha(3), beta(3), gamma(1), delta(1), epsilon(1). CF(0) has three main subunits: a, b and c.

The protein resides in the mitochondrion inner membrane. In terms of biological role, mitochondrial membrane ATP synthase (F(1)F(0) ATP synthase or Complex V) produces ATP from ADP in the presence of a proton gradient across the membrane which is generated by electron transport complexes of the respiratory chain. F-type ATPases consist of two structural domains, F(1) - containing the extramembraneous catalytic core and F(0) - containing the membrane proton channel, linked together by a central stalk and a peripheral stalk. During catalysis, ATP synthesis in the catalytic domain of F(1) is coupled via a rotary mechanism of the central stalk subunits to proton translocation. Key component of the proton channel; it may play a direct role in the translocation of protons across the membrane. The protein is ATP synthase subunit a (ATP6) of Ascaris suum (Pig roundworm).